A 95-amino-acid chain; its full sequence is Protein TusB (95 aa).

Belongs to the DsrH/TusB family. In terms of assembly, heterohexamer, formed by a dimer of trimers. The hexameric TusBCD complex contains 2 copies each of TusB, TusC and TusD. The TusBCD complex interacts with TusE.

The protein resides in the cytoplasm. Its function is as follows. Part of a sulfur-relay system required for 2-thiolation of 5-methylaminomethyl-2-thiouridine (mnm(5)s(2)U) at tRNA wobble positions. The chain is Protein TusB from Escherichia fergusonii (strain ATCC 35469 / DSM 13698 / CCUG 18766 / IAM 14443 / JCM 21226 / LMG 7866 / NBRC 102419 / NCTC 12128 / CDC 0568-73).